Consider the following 697-residue polypeptide: uncharacterized protein (697 aa).

The next 5 membrane-spanning stretches (helical) occupy residues 45-65, 86-106, 128-148, 198-218, and 280-300; these read LCAV…LALL, TVAA…MGVV, VVVS…GMLA, VLLG…WWAL, and HLAI…ILAG. ABC transporter domains are found at residues 251-473 and 477-696; these read VRLD…QPQH and LELV…AGGM. ATP is bound by residues 285–292 and 514–521; these read GANGSGKT and GGNGSGKS. A helical transmembrane segment spans residues 522-542; it reads TLAWIMAGLTIPTTGACLLDG.

This sequence belongs to the ABC transporter superfamily.

It is found in the cell membrane. This is an uncharacterized protein from Mycobacterium tuberculosis (strain CDC 1551 / Oshkosh).